A 251-amino-acid polypeptide reads, in one-letter code: Flap endonuclease Xni (251 aa).

Aspartate 104 lines the Mg(2+) pocket. The 5'-3' exonuclease domain maps to 160 to 249 (VLPRQLPDYW…IDGNLQQLRL (90 aa)). Leucine 171, alanine 172, proline 180, valine 182, and isoleucine 185 together coordinate K(+). The segment at 184–189 (GIGPKS) is interaction with DNA.

It belongs to the Xni family. Requires Mg(2+) as cofactor. The cofactor is K(+).

Functionally, has flap endonuclease activity. During DNA replication, flap endonucleases cleave the 5'-overhanging flap structure that is generated by displacement synthesis when DNA polymerase encounters the 5'-end of a downstream Okazaki fragment. In Salmonella typhimurium (strain LT2 / SGSC1412 / ATCC 700720), this protein is Flap endonuclease Xni.